We begin with the raw amino-acid sequence, 704 residues long: Elongation factor G (704 aa).

In terms of domain architecture, tr-type G spans 8–290 (ARYRNIGISA…AVIEYLPAPT (283 aa)). Residues 17 to 24 (AHIDAGKT), 88 to 92 (DTPGH), and 142 to 145 (NKMD) each bind GTP.

The protein belongs to the TRAFAC class translation factor GTPase superfamily. Classic translation factor GTPase family. EF-G/EF-2 subfamily.

It localises to the cytoplasm. Catalyzes the GTP-dependent ribosomal translocation step during translation elongation. During this step, the ribosome changes from the pre-translocational (PRE) to the post-translocational (POST) state as the newly formed A-site-bound peptidyl-tRNA and P-site-bound deacylated tRNA move to the P and E sites, respectively. Catalyzes the coordinated movement of the two tRNA molecules, the mRNA and conformational changes in the ribosome. This chain is Elongation factor G, found in Proteus mirabilis (strain HI4320).